A 621-amino-acid polypeptide reads, in one-letter code: Laccase-2 (621 aa).

Residues 1–23 form the signal peptide; that stretch reads MMKSFFSAAALLLGLVAPSAVLA. A propeptide spanning residues 24-48 is cleaved from the precursor; that stretch reads APSLPGVPREVTRDLLRPVEERQSS. A disulfide bridge links Cys49 with Cys57. Plastocyanin-like domains are found at residues 78–201 and 210–367; these read TRTY…IVVN and IDLG…LPTN. An N-linked (GlcNAc...) asparagine glycan is attached at Asn133. His138, His140, His183, and His185 together coordinate Cu cation. 2 cysteine pairs are disulfide-bonded: Cys159-Cys586 and Cys343-Cys377. N-linked (GlcNAc...) asparagine glycans are attached at residues Asn261, Asn276, Asn289, Asn325, and Asn334. Asn401, Asn421, and Asn441 each carry an N-linked (GlcNAc...) asparagine glycan. Residues 430 to 566 enclose the Plastocyanin-like 3 domain; that stretch reads DKPIVDYVIA…GGLSVQYLER (137 aa). 7 residues coordinate Cu cation: His476, His479, His481, His548, Cys549, His550, and His554. The propeptide occupies 606–621; it reads KVKKWVGEHPDWYIKN.

This sequence belongs to the multicopper oxidase family. Monomer. It depends on Cu cation as a cofactor. Post-translationally, proteolytically processed at both its N-terminus and its C-terminus.

It localises to the secreted. The catalysed reaction is 4 hydroquinone + O2 = 4 benzosemiquinone + 2 H2O. Its function is as follows. Probably involved in lignin degradation and in the detoxification of lignin-derived products in its natural habitat (herbivorous dung), which is rich in lignin of grasses and straw. Probably involved in melanin synthesis and in perithecia development. This is Laccase-2 (LAC2) from Podospora anserina (Pleurage anserina).